The chain runs to 1064 residues: Error-prone DNA polymerase (1064 aa).

This sequence belongs to the DNA polymerase type-C family. DnaE2 subfamily.

The protein localises to the cytoplasm. The enzyme catalyses DNA(n) + a 2'-deoxyribonucleoside 5'-triphosphate = DNA(n+1) + diphosphate. In terms of biological role, DNA polymerase involved in damage-induced mutagenesis and translesion synthesis (TLS). It is not the major replicative DNA polymerase. The chain is Error-prone DNA polymerase from Azoarcus sp. (strain BH72).